We begin with the raw amino-acid sequence, 169 residues long: S-ribosylhomocysteine lyase (169 aa).

Residues histidine 54, histidine 58, and cysteine 128 each contribute to the Fe cation site.

This sequence belongs to the LuxS family. As to quaternary structure, homodimer. Requires Fe cation as cofactor.

The enzyme catalyses S-(5-deoxy-D-ribos-5-yl)-L-homocysteine = (S)-4,5-dihydroxypentane-2,3-dione + L-homocysteine. In terms of biological role, involved in the synthesis of autoinducer 2 (AI-2) which is secreted by bacteria and is used to communicate both the cell density and the metabolic potential of the environment. The regulation of gene expression in response to changes in cell density is called quorum sensing. Catalyzes the transformation of S-ribosylhomocysteine (RHC) to homocysteine (HC) and 4,5-dihydroxy-2,3-pentadione (DPD). The chain is S-ribosylhomocysteine lyase from Shewanella amazonensis (strain ATCC BAA-1098 / SB2B).